Consider the following 202-residue polypeptide: Syndecan-4 (202 aa).

The first 22 residues, 1-22 (MASPRLLALLLLLVGAFNAAAA), serve as a signal peptide directing secretion. Over 23–152 (ESIRETEVIN…NIFERTEVLS (130 aa)) the chain is Extracellular. 2 disordered regions span residues 41-75 (YFSG…GPED) and 87-112 (VPLD…ELEE). S43 carries an O-linked (Xyl...) (glycosaminoglycan) serine glycan. The segment covering 46–63 (LPDDEDVGGPGQEPDDFE) has biased composition (acidic residues). 2 O-linked (Xyl...) (glycosaminoglycan) serine glycosylation sites follow: S65 and S67. A helical membrane pass occupies residues 153-173 (ALIVGGIVGILFAVFLVLLLV). Residues 174–202 (YRMKKKDEGSYDLGKKPIYKKAPTNEFYA) lie on the Cytoplasmic side of the membrane.

Belongs to the syndecan proteoglycan family. In terms of assembly, homodimer. Interacts with CDCP1 and SDCBP. Interacts (via its cytoplasmic domain) with GIPC (via its PDZ domain). Interacts (via its cytoplasmic domain) with NUDT16L1. Interacts with DNM2; this interaction is markedly enhanced at focal ahesion site upon induction of focal adhesions and stress-fiber formation. Shedding, cleavage of the extracellular domain to release a soluble form, is enhanced by a number of factors such as heparanase, growth factor receptor action for example by thrombin or EGF. Physiological events such as stress or wound healing can activate the shedding. PMA-mediated shedding is inhibited by TIMP3. Post-translationally, O-glycosylated; contains both chondroitin sulfate and heparan sulfate. Ser-43, Ser-65 and Ser-67 can all be modified by either chondroitin sulfate or heparan sulfate, and the protein exists in forms that contain only chondroitin sulfate, only heparan sulfate and both chondroitin sulfate and heparan sulfate.

It is found in the membrane. The protein localises to the secreted. Functionally, cell surface proteoglycan which regulates exosome biogenesis in concert with SDCBP and PDCD6IP. The sequence is that of Syndecan-4 from Sus scrofa (Pig).